The chain runs to 333 residues: Phosphate acyltransferase (333 aa).

It belongs to the PlsX family. As to quaternary structure, homodimer. Probably interacts with PlsY.

The protein localises to the cytoplasm. The catalysed reaction is a fatty acyl-[ACP] + phosphate = an acyl phosphate + holo-[ACP]. It participates in lipid metabolism; phospholipid metabolism. Functionally, catalyzes the reversible formation of acyl-phosphate (acyl-PO(4)) from acyl-[acyl-carrier-protein] (acyl-ACP). This enzyme utilizes acyl-ACP as fatty acyl donor, but not acyl-CoA. This chain is Phosphate acyltransferase, found in Aliarcobacter butzleri (strain RM4018) (Arcobacter butzleri).